We begin with the raw amino-acid sequence, 140 residues long: Calcium-binding protein B (140 aa).

2 consecutive EF-hand domains span residues 38-73 (ATLSKYKTQFMSYDINNSGDIDHYELQLLMEKINQP) and 74-109 (KTYLELKKMIEQVDSTGKGAINFRDFIKMMTGKTSS). Ca(2+) contacts are provided by aspartate 51, asparagine 53, serine 55, aspartate 57, and glutamate 62.

The chain is Calcium-binding protein B (cbpB) from Dictyostelium discoideum (Social amoeba).